The following is a 139-amino-acid chain: uncharacterized protein (139 aa).

This is an uncharacterized protein from Galliformes (FAdV-1).